A 339-amino-acid chain; its full sequence is Ribosomal RNA large subunit methyltransferase F (339 aa).

A disordered region spans residues 1–26 (MTAPSTPKPQRKKPKTATTAKPVVPR).

The protein belongs to the methyltransferase superfamily. METTL16/RlmF family.

The protein resides in the cytoplasm. The catalysed reaction is adenosine(1618) in 23S rRNA + S-adenosyl-L-methionine = N(6)-methyladenosine(1618) in 23S rRNA + S-adenosyl-L-homocysteine + H(+). Specifically methylates the adenine in position 1618 of 23S rRNA. This Pseudomonas fluorescens (strain SBW25) protein is Ribosomal RNA large subunit methyltransferase F.